Here is a 186-residue protein sequence, read N- to C-terminus: NADH-quinone oxidoreductase subunit B (186 aa).

Positions 44, 45, 110, and 139 each coordinate [4Fe-4S] cluster.

Belongs to the complex I 20 kDa subunit family. NDH-1 is composed of 14 different subunits. Subunits NuoB, C, D, E, F, and G constitute the peripheral sector of the complex. The cofactor is [4Fe-4S] cluster.

The protein resides in the cell inner membrane. The enzyme catalyses a quinone + NADH + 5 H(+)(in) = a quinol + NAD(+) + 4 H(+)(out). Functionally, NDH-1 shuttles electrons from NADH, via FMN and iron-sulfur (Fe-S) centers, to quinones in the respiratory chain. The immediate electron acceptor for the enzyme in this species is believed to be ubiquinone. Couples the redox reaction to proton translocation (for every two electrons transferred, four hydrogen ions are translocated across the cytoplasmic membrane), and thus conserves the redox energy in a proton gradient. This chain is NADH-quinone oxidoreductase subunit B, found in Leptospira borgpetersenii serovar Hardjo-bovis (strain JB197).